A 286-amino-acid polypeptide reads, in one-letter code: tRNA (guanine-N(7)-)-methyltransferase (286 aa).

S-adenosyl-L-methionine-binding positions include Gly91, 114–115, 158–159, and Leu178; these read EI and NS. Asp181 is a catalytic residue. S-adenosyl-L-methionine is bound at residue 256–258; that stretch reads TEE.

This sequence belongs to the class I-like SAM-binding methyltransferase superfamily. TrmB family. In terms of assembly, forms a complex with TRM82.

The protein localises to the nucleus. The catalysed reaction is guanosine(46) in tRNA + S-adenosyl-L-methionine = N(7)-methylguanosine(46) in tRNA + S-adenosyl-L-homocysteine. Its pathway is tRNA modification; N(7)-methylguanine-tRNA biosynthesis. Its function is as follows. Catalyzes the formation of N(7)-methylguanine at position 46 (m7G46) in tRNA. The chain is tRNA (guanine-N(7)-)-methyltransferase from Cryptococcus neoformans var. neoformans serotype D (strain B-3501A) (Filobasidiella neoformans).